A 937-amino-acid polypeptide reads, in one-letter code: Alanine--tRNA ligase (937 aa).

The Zn(2+) site is built by His-626, His-630, Cys-727, and His-731.

This sequence belongs to the class-II aminoacyl-tRNA synthetase family. Zn(2+) serves as cofactor.

The protein localises to the cytoplasm. The catalysed reaction is tRNA(Ala) + L-alanine + ATP = L-alanyl-tRNA(Ala) + AMP + diphosphate. Its function is as follows. Catalyzes the attachment of alanine to tRNA(Ala) in a two-step reaction: alanine is first activated by ATP to form Ala-AMP and then transferred to the acceptor end of tRNA(Ala). Also edits incorrectly charged Ser-tRNA(Ala) and Gly-tRNA(Ala) via its editing domain. The sequence is that of Alanine--tRNA ligase from Opitutus terrae (strain DSM 11246 / JCM 15787 / PB90-1).